We begin with the raw amino-acid sequence, 452 residues long: Lichenan permease IIC component (452 aa).

Residues 8–421 enclose the PTS EIIC type-3 domain; it reads LEEKVMPIAG…AVSFVVYYPF (414 aa). 10 consecutive transmembrane segments (helical) span residues 31–51, 72–92, 104–124, 138–158, 187–207, 218–238, 246–266, 291–311, 351–373, and 402–422; these read GIIL…IGNL, LAYP…FGIA, LSAG…QVPF, GIPL…IAMV, FVAL…RLIV, IVSV…GGSL, LLWA…APIW, FFDI…VVTM, LLLP…MSTG, and SGAV…YPFF.

It is found in the cell membrane. The phosphoenolpyruvate-dependent sugar phosphotransferase system (PTS), a major carbohydrate active -transport system, catalyzes the phosphorylation of incoming sugar substrates concomitant with their translocation across the cell membrane. This system is involved in lichenan transport. The protein is Lichenan permease IIC component (licC) of Bacillus subtilis (strain 168).